The primary structure comprises 363 residues: Adenosine kinase (363 aa).

Ala185, Ile188, and Ala191 together coordinate Mg(2+). Asp318 is an active-site residue.

Belongs to the carbohydrate kinase PfkB family. The cofactor is Mg(2+).

It catalyses the reaction adenosine + ATP = AMP + ADP + H(+). Its pathway is purine metabolism; AMP biosynthesis via salvage pathway; AMP from adenosine: step 1/1. In terms of biological role, ATP-dependent phosphorylation of adenosine and other related nucleoside analogs to monophosphate derivatives. It is a key purine metabolic enzyme in the opportunistic parasitic protozoan toxoplasma gondii as it cannot synthesize purines de novo. The protein is Adenosine kinase (AK) of Toxoplasma gondii.